Consider the following 424-residue polypeptide: CinA-like protein (424 aa).

Belongs to the CinA family.

The polypeptide is CinA-like protein (Shewanella putrefaciens (strain CN-32 / ATCC BAA-453)).